Here is a 206-residue protein sequence, read N- to C-terminus: LexA repressor (206 aa).

Residues 28 to 48 constitute a DNA-binding region (H-T-H motif); the sequence is VREICAAVGLSSTSTVHGHLT. Residues S127 and K165 each act as for autocatalytic cleavage activity in the active site.

It belongs to the peptidase S24 family. In terms of assembly, homodimer.

The enzyme catalyses Hydrolysis of Ala-|-Gly bond in repressor LexA.. Functionally, represses a number of genes involved in the response to DNA damage (SOS response), including recA and lexA. In the presence of single-stranded DNA, RecA interacts with LexA causing an autocatalytic cleavage which disrupts the DNA-binding part of LexA, leading to derepression of the SOS regulon and eventually DNA repair. This Lactobacillus delbrueckii subsp. bulgaricus (strain ATCC 11842 / DSM 20081 / BCRC 10696 / JCM 1002 / NBRC 13953 / NCIMB 11778 / NCTC 12712 / WDCM 00102 / Lb 14) protein is LexA repressor.